A 157-amino-acid chain; its full sequence is Protein Smg homolog (157 aa).

Belongs to the Smg family.

The sequence is that of Protein Smg homolog from Photobacterium profundum (strain SS9).